We begin with the raw amino-acid sequence, 100 residues long: Urease subunit gamma (100 aa).

Belongs to the urease gamma subunit family. Heterotrimer of UreA (gamma), UreB (beta) and UreC (alpha) subunits. Three heterotrimers associate to form the active enzyme.

The protein localises to the cytoplasm. It carries out the reaction urea + 2 H2O + H(+) = hydrogencarbonate + 2 NH4(+). The protein operates within nitrogen metabolism; urea degradation; CO(2) and NH(3) from urea (urease route): step 1/1. The polypeptide is Urease subunit gamma (Ectopseudomonas mendocina (strain ymp) (Pseudomonas mendocina)).